Consider the following 244-residue polypeptide: tRNA (guanine-N(7)-)-methyltransferase (244 aa).

S-adenosyl-L-methionine contacts are provided by Glu-42, Asp-67, Asp-94, and Asp-116. Asp-116 is an active-site residue. Substrate is bound by residues Lys-120, Asp-150, and 191 to 194; that span reads TYYE.

The protein belongs to the class I-like SAM-binding methyltransferase superfamily. TrmB family.

The catalysed reaction is guanosine(46) in tRNA + S-adenosyl-L-methionine = N(7)-methylguanosine(46) in tRNA + S-adenosyl-L-homocysteine. The protein operates within tRNA modification; N(7)-methylguanine-tRNA biosynthesis. Functionally, catalyzes the formation of N(7)-methylguanine at position 46 (m7G46) in tRNA. The polypeptide is tRNA (guanine-N(7)-)-methyltransferase (Porphyromonas gingivalis (strain ATCC BAA-308 / W83)).